Reading from the N-terminus, the 271-residue chain is Fatty acid elongase 2 (271 aa).

Residues 16 to 36 form a helical membrane-spanning segment; that stretch reads WMIDNVDVAGFLCLLYLGLVW. A glycan (N-linked (GlcNAc...) asparagine) is linked at Asn52. 2 helical membrane passes run 59 to 79 and 110 to 130; these read VFIM…IVVV and FWVG…VLLV. A HxxHH motif motif is present at residues 140–144; that stretch reads HWYHH. His143 acts as the Nucleophile in catalysis. Helical transmembrane passes span 162–182, 194–214, and 241–261; these read IFVF…YFAM, IAPV…AVTM, and GVVM…ESYL.

It belongs to the ELO family.

The protein resides in the endoplasmic reticulum membrane. It carries out the reaction an acyl-CoA + malonyl-CoA + H(+) = a 3-oxoacyl-CoA + CO2 + CoA. The protein operates within lipid metabolism; fatty acid biosynthesis. In terms of biological role, involved in the synthesis of fatty acids. Elongates C10 fatty acids to C14. In Trypanosoma brucei brucei (strain 927/4 GUTat10.1), this protein is Fatty acid elongase 2.